The following is a 160-amino-acid chain: Monooxygenase AacuO (160 aa).

This sequence belongs to the avfA family.

The protein operates within secondary metabolite biosynthesis. Functionally, monooxygenase; part of the gene cluster that mediates the biosynthesis of the tetrahydroxanthone dimer secalonic acid D. The pathway begins with the synthesis of atrochrysone thioester by the polyketide synthase AacuL. The atrochrysone carboxyl ACP thioesterase AacuM then breaks the thioester bond and releases the atrochrysone carboxylic acid from AacuL. Atrochrysone carboxylic acid is decarboxylated by the decarboxylase AacuI, and oxidized by the anthrone oxygenase AacuG to yield emodin. Emodin is then reduced to emodin hydroquinone by a yet unidentified oxidoreductase. A-ring reduction by the short chain dehydrogenase AacuN, dehydration by the scytalone dehydratase-like protein AacuK and probable spontaneous re-oxidation, results in overall deoxygenation to chrysophanol. Baeyer-Villiger oxidation by the Baeyer-Villiger monooxygenase (BVMO) AacuH then yields monodictyphenone. Monodictyphenone is transformed into compounds with the tetrahydroxanthone skeleton via methylesterification by the methyltransferase AacuQ, followed by the action of the flavin-dependent monooxygenase AacuC, the isomerase AacuP, and the short chain dehydrogenase/reductase AacuF or AacuD. AacuF and AacuD should accept the same compound as a substrate but perform the ketoreduction with a different stereoselectivity, thus yielding blennolides B and A, respectively. In the final step of the biosynthesis, the cytochrome P450 monooxygenase AacuE accepts blennolide B and/or blennolide A to conduct the dimerization reaction to furnish the tetrahydroxanthone dimers, secalonic acids D, B, and F. The polypeptide is Monooxygenase AacuO (Aspergillus aculeatus (strain ATCC 16872 / CBS 172.66 / WB 5094)).